The primary structure comprises 264 residues: GTP cyclohydrolase FolE2 (264 aa).

This sequence belongs to the GTP cyclohydrolase IV family.

It catalyses the reaction GTP + H2O = 7,8-dihydroneopterin 3'-triphosphate + formate + H(+). The protein operates within cofactor biosynthesis; 7,8-dihydroneopterin triphosphate biosynthesis; 7,8-dihydroneopterin triphosphate from GTP: step 1/1. Its function is as follows. Converts GTP to 7,8-dihydroneopterin triphosphate. The chain is GTP cyclohydrolase FolE2 from Ruthia magnifica subsp. Calyptogena magnifica.